The following is a 337-amino-acid chain: Fructose-1,6-bisphosphatase class 1 (337 aa).

Mg(2+) is bound by residues glutamate 94, aspartate 116, leucine 118, and aspartate 119. Residues 119 to 122 (DGSS), asparagine 210, and lysine 276 contribute to the substrate site. A Mg(2+)-binding site is contributed by glutamate 282.

This sequence belongs to the FBPase class 1 family. Homotetramer. The cofactor is Mg(2+).

It is found in the cytoplasm. The catalysed reaction is beta-D-fructose 1,6-bisphosphate + H2O = beta-D-fructose 6-phosphate + phosphate. Its pathway is carbohydrate biosynthesis; gluconeogenesis. The chain is Fructose-1,6-bisphosphatase class 1 from Burkholderia orbicola (strain MC0-3).